Consider the following 57-residue polypeptide: Small hydrophobic protein (57 aa).

At 1 to 8 (MPAIQPPL) the chain is on the virion surface side. A helical transmembrane segment spans residues 9–29 (YPTFLLLILLSLIITLYVWII). Residues 30–57 (STITYKTAVRHAALHQRSFSRWSLDHSL) lie on the Intravirion side of the membrane.

This sequence belongs to the rubulavirus small hydrophobic protein family. As to quaternary structure, interacts with host TNFRSF1A, RIPK1 and IRAK1; these interactions interfere with host NF-kappa-B activation at the level of receptor complexes. Interacts with host protein UBQLN4.

The protein localises to the virion membrane. It localises to the host cell membrane. In terms of biological role, plays a role in the inhibition of the host NF-kappa-B pathway. This inhibition occurs at the receptor level, by preventing the signaling of TNFR1 as well as IL-1R and TLR3. This Mumps virus genotype B (strain Miyahara vaccine) (MuV) protein is Small hydrophobic protein (SH).